A 105-amino-acid chain; its full sequence is Heat shock protein HspQ (105 aa).

The disordered stretch occupies residues 74–105 (SSETQDEHPEQPSMDELARTIRKQLQAPRLRN).

The protein belongs to the HspQ family.

It localises to the cytoplasm. Functionally, involved in the degradation of certain denaturated proteins, including DnaA, during heat shock stress. The chain is Heat shock protein HspQ from Citrobacter koseri (strain ATCC BAA-895 / CDC 4225-83 / SGSC4696).